The chain runs to 126 residues: Profilin-3 (126 aa).

This sequence belongs to the profilin family. Occurs in many kinds of cells as a complex with monomeric actin in a 1:1 ratio.

It localises to the cytoplasm. It is found in the cytoskeleton. Its function is as follows. Binds to actin and affects the structure of the cytoskeleton. At high concentrations, profilin prevents the polymerization of actin, whereas it enhances it at low concentrations. By binding to PIP2, it inhibits the formation of IP3 and DG. This chain is Profilin-3 (proC), found in Dictyostelium discoideum (Social amoeba).